The sequence spans 953 residues: Zinc finger protein 618 (953 aa).

At M1 the chain carries N-acetylmethionine. Positions 1–56 (MSQPDGAAAPQVDGASAPGRKSAVNRERLKRSQKSSKVEGPEPVPAEASLSAEQGT) are disordered. Glycyl lysine isopeptide (Lys-Gly) (interchain with G-Cter in SUMO2) cross-links involve residues K63 and K81. C2H2-type zinc fingers lie at residues 146-168 (YECGICGKKYKYYNCFQTHVRAH) and 187-209 (YTCDICGKKYKYYSCFQEHRDLH). Residue K238 forms a Glycyl lysine isopeptide (Lys-Gly) (interchain with G-Cter in SUMO2) linkage. The C2H2-type 3 zinc-finger motif lies at 255 to 277 (YTCEFCGKQYKYYTPYQEHVALH). Disordered stretches follow at residues 283–305 (APGWEPPEDPDTGSECSHPEVTP) and 337–390 (TPPA…SSEP). The segment covering 339–354 (PATQTQTFRAPNSGSP) has biased composition (polar residues). Residues 365-379 (FSRRVESKAQNHFEE) are compositionally biased toward basic and acidic residues. The segment at 391–413 (YTCGACGIQFQFYSNLLEHMQSH) adopts a C2H2-type 4 zinc-finger fold. A compositionally biased stretch (polar residues) spans 419–428 (NNITSNQSRS). The tract at residues 419 to 461 (NNITSNQSRSPPAAVEEKWKPQAQRNSANNTTTSGLTPNSVIP) is disordered. A Glycyl lysine isopeptide (Lys-Gly) (interchain with G-Cter in SUMO2) cross-link involves residue K436. Residues 441–458 (AQRNSANNTTTSGLTPNS) are compositionally biased toward polar residues.

This sequence belongs to the krueppel C2H2-type zinc-finger protein family. As to quaternary structure, interacts with UHRF2.

The protein resides in the nucleus. The protein localises to the chromosome. Regulates UHRF2 function as a specific 5-hydroxymethylcytosine (5hmC) reader by regulating its chromatin localization. This chain is Zinc finger protein 618 (Znf618), found in Mus musculus (Mouse).